Consider the following 505-residue polypeptide: Chromatin assembly factor 1 subunit FAS2 homolog (505 aa).

7 WD repeats span residues 11 to 50, 62 to 101, 110 to 149, 152 to 191, 223 to 268, 278 to 333, and 337 to 378; these read HEQQ…SDKK, SHSS…DGEA, FHHK…VQQK, GHLH…KSKN, FHDE…SRRD, GASK…PILI, and LHYA…LPYN. The disordered stretch occupies residues 479-505; the sequence is VTAPPVSTKNSASSKPTKKRITPIAIN.

The protein belongs to the WD repeat HIR1 family. As to quaternary structure, component of the chromatin assembly factor 1 (CAF-1) complex, composed of FSM (FAS1), FAS2 and MSI1.

The protein localises to the nucleus. In terms of biological role, component of the chromatin assembly factor complex (CAF-1) involved in chromatin assembly following DNA replication and DNA repair. Required for several aspects of development, including apical meristem maintenance by regulating the durations of the S- and G2-phases of the cell cycle through its chromatin assembly activity. The polypeptide is Chromatin assembly factor 1 subunit FAS2 homolog (FAS2) (Oryza sativa subsp. japonica (Rice)).